We begin with the raw amino-acid sequence, 347 residues long: FK506-binding protein-like (347 aa).

Residues 1–36 (METSLISPMKENNTAQPQQREENTQQNLNAAVPIKQ) form a disordered region. At T3 the chain carries Phosphothreonine. TPR repeat units lie at residues 208–241 (AKEE…LLTL), 250–283 (TILH…EPGH), and 284–317 (LKAL…DPKN).

As to quaternary structure, forms a ternary complex with CDKN1A/p21 and HSP90AB1/Hsp90.

Functionally, may be involved in response to X-ray. Regulates p21 protein stability by binding to Hsp90 and p21. The protein is FK506-binding protein-like (Fkbpl) of Rattus norvegicus (Rat).